Consider the following 120-residue polypeptide: Holo-[acyl-carrier-protein] synthase (120 aa).

The Mg(2+) site is built by Asp8 and Glu60.

The protein belongs to the P-Pant transferase superfamily. AcpS family. Requires Mg(2+) as cofactor.

The protein localises to the cytoplasm. It carries out the reaction apo-[ACP] + CoA = holo-[ACP] + adenosine 3',5'-bisphosphate + H(+). Transfers the 4'-phosphopantetheine moiety from coenzyme A to a Ser of acyl-carrier-protein. This Anaplasma marginale (strain St. Maries) protein is Holo-[acyl-carrier-protein] synthase.